A 641-amino-acid polypeptide reads, in one-letter code: Serine/threonine-protein kinase PK-1 (641 aa).

Residues 18–280 (YRVDARIAVG…ARARDARARL (263 aa)) form the Protein kinase domain. ATP-binding positions include 24–32 (IAVGGMATV) and lysine 47. Residue aspartate 141 is the Proton acceptor of the active site. Residues 317 to 347 (LPVNEEDEGADAAHRTSRFRSPPPLPPRGRT) are disordered. 4 consecutive PASTA domains span residues 375–441 (SGQF…TLSK), 442–508 (GPRT…LTVS), 509–576 (KGAP…TLSK), and 577–641 (GPEM…IEIR). Residues 469 to 494 (KPGMSTREFSDSVPAGSVISTEPGKG) form a disordered region.

Belongs to the protein kinase superfamily. Ser/Thr protein kinase family. Autophosphorylated on threonine residue(s).

The catalysed reaction is L-seryl-[protein] + ATP = O-phospho-L-seryl-[protein] + ADP + H(+). The enzyme catalyses L-threonyl-[protein] + ATP = O-phospho-L-threonyl-[protein] + ADP + H(+). The polypeptide is Serine/threonine-protein kinase PK-1 (spk1) (Streptomyces toyocaensis).